The sequence spans 154 residues: MAL-like protein (154 aa).

Transmembrane regions (helical) follow at residues 24–44, 61–81, 99–119, and 131–151; these read LFLT…FWVW, VLYV…SYLF, GTTG…TIIS, and VAAS…AFSI. Residues 24–154 form the MARVEL domain; sequence LFLTIPFAFF…ILHAFSIYYH (131 aa).

This sequence belongs to the MAL family.

Its subcellular location is the membrane. The protein is MAL-like protein (Mall) of Mus musculus (Mouse).